Here is a 271-residue protein sequence, read N- to C-terminus: Mannosyl-3-phosphoglycerate phosphatase (271 aa).

Asp13 functions as the Nucleophile in the catalytic mechanism. 3 residues coordinate Mg(2+): Asp13, Asp15, and Asp214.

Belongs to the HAD-like hydrolase superfamily. MPGP family. Mg(2+) serves as cofactor.

The protein localises to the cytoplasm. It catalyses the reaction 2-O-(alpha-D-mannosyl)-3-phosphoglycerate + H2O = (2R)-2-O-(alpha-D-mannosyl)-glycerate + phosphate. This Escherichia coli O127:H6 (strain E2348/69 / EPEC) protein is Mannosyl-3-phosphoglycerate phosphatase.